Reading from the N-terminus, the 412-residue chain is Inositol polyphosphate-5-phosphatase A (412 aa).

C409 carries S-farnesyl cysteine lipidation. Positions V410 to Q412 are cleaved as a propeptide — removed in mature form.

It belongs to the inositol 1,4,5-trisphosphate 5-phosphatase type I family. Interacts with TASOR. In terms of processing, isoprenylation at Cys-409 is required for localization at the membrane. In terms of tissue distribution, expressed at high levels in cerebellar Purkinje cells (at protein level). Expressed in Sertoli cells of the testis.

The protein resides in the cell membrane. Its subcellular location is the cell projection. It is found in the dendrite. The catalysed reaction is 1D-myo-inositol 1,4,5-trisphosphate + H2O = 1D-myo-inositol 1,4-bisphosphate + phosphate. It carries out the reaction 1D-myo-inositol 1,3,4,5-tetrakisphosphate + H2O = 1D-myo-inositol 1,3,4-trisphosphate + phosphate. Its function is as follows. Phosphatase that specifically hydrolyzes the 5-phosphate of inositol 1,4,5-trisphosphate to inositol 1,4-bisphosphate, and inositol 1,3,4,5-tetrasphosphate to inositol 1,3,4-trisphosphate. Plays a crucial role in the survival of cerebellar Purkinje cells. The protein is Inositol polyphosphate-5-phosphatase A (Inpp5a) of Mus musculus (Mouse).